Consider the following 92-residue polypeptide: Small ribosomal subunit protein uS19 (92 aa).

Belongs to the universal ribosomal protein uS19 family.

Its function is as follows. Protein S19 forms a complex with S13 that binds strongly to the 16S ribosomal RNA. The protein is Small ribosomal subunit protein uS19 of Shewanella halifaxensis (strain HAW-EB4).